The primary structure comprises 147 residues: Spermidine export protein MdtJ (147 aa).

The next 4 membrane-spanning stretches (helical) occupy residues 1-21 (MIYW…TLSM), 31-51 (TGHV…SLAV), 54-74 (VALG…ITIF), and 81-101 (ETLS…ILLV). Residues 105–117 (TRKPKQPNRHRGN) are compositionally biased toward basic residues. Residues 105–147 (TRKPKQPNRHRGNRPPSVQGLKTQTTGHHKGVAVESGEHHAAA) are disordered.

Belongs to the drug/metabolite transporter (DMT) superfamily. Small multidrug resistance (SMR) (TC 2.A.7.1) family. MdtJ subfamily. In terms of assembly, forms a complex with MdtI.

Its subcellular location is the cell inner membrane. Catalyzes the excretion of spermidine. This Yersinia pseudotuberculosis serotype IB (strain PB1/+) protein is Spermidine export protein MdtJ.